The primary structure comprises 69 residues: M-poneratoxin-Dq4e (69 aa).

The first 25 residues, 1–25, serve as a signal peptide directing secretion; that stretch reads MKLSAFTLAFALILMMAIMYNMAEA. Residues 26 to 39 constitute a propeptide that is removed on maturation; that stretch reads AALADADADAEAIA.

Expressed by the venom gland.

The protein localises to the secreted. May have antimicrobial properties, like most ant linear peptides. In addition, when tested in vitro on the parasite Trypanosoma cruzi (responsible of the Chagas disease), is able to moderately reduce the number of the three forms (epimastigote, trypomastigote and amastigote) by inducing cell death through necrosis. This is M-poneratoxin-Dq4e from Dinoponera quadriceps (South American ant).